Here is a 348-residue protein sequence, read N- to C-terminus: Probable protein phosphatase 2C 35 (348 aa).

Low complexity predominate over residues 11–24 (RYPSSSSDGDSRGP). The tract at residues 11 to 40 (RYPSSSSDGDSRGPLEANGVLKGKDQKPLG) is disordered. The PPM-type phosphatase domain maps to 52–342 (VYSVLSQRGY…DDITIIIVQI (291 aa)). Residues D93, G94, D289, and D333 each contribute to the Mn(2+) site.

The protein belongs to the PP2C family. Mg(2+) is required as a cofactor. It depends on Mn(2+) as a cofactor.

The enzyme catalyses O-phospho-L-seryl-[protein] + H2O = L-seryl-[protein] + phosphate. It catalyses the reaction O-phospho-L-threonyl-[protein] + H2O = L-threonyl-[protein] + phosphate. In Arabidopsis thaliana (Mouse-ear cress), this protein is Probable protein phosphatase 2C 35.